A 938-amino-acid chain; its full sequence is Mediator of RNA polymerase II transcription subunit 16 (938 aa).

Belongs to the Mediator complex subunit 16 family. In terms of assembly, component of the Mediator complex.

It is found in the nucleus. Functionally, component of the Mediator complex, a coactivator involved in the regulated transcription of nearly all RNA polymerase II-dependent genes. Mediator functions as a bridge to convey information from gene-specific regulatory proteins to the basal RNA polymerase II transcription machinery. Mediator is recruited to promoters by direct interactions with regulatory proteins and serves as a scaffold for the assembly of a functional preinitiation complex with RNA polymerase II and the general transcription factors. This chain is Mediator of RNA polymerase II transcription subunit 16 (SIN4), found in Eremothecium gossypii (strain ATCC 10895 / CBS 109.51 / FGSC 9923 / NRRL Y-1056) (Yeast).